The following is a 299-amino-acid chain: S-fimbrial protein subunit SfaH (299 aa).

The protein belongs to the fimbrial protein family.

It localises to the fimbrium. Its function is as follows. Fimbriae (also called pili), polar filaments radiating from the surface of the bacterium to a length of 0.5-1.5 micrometers and numbering 100-300 per cell, enable bacteria to colonize the epithelium of specific host organs. A minor fimbrial subunit. This protein is necessary for full expression of S-specific binding. S-fimbrial adhesins enable pathogenic E.coli causing urinary-tract infections or newborn meningitis to attach to glycoproteins terminating with alpha-sialic acid-(2-3)-beta-Gal. This is S-fimbrial protein subunit SfaH (sfaH) from Escherichia coli O6:K15:H31 (strain 536 / UPEC).